Consider the following 67-residue polypeptide: Large ribosomal subunit protein bL35 (67 aa).

Belongs to the bacterial ribosomal protein bL35 family.

The protein is Large ribosomal subunit protein bL35 of Leptospira borgpetersenii serovar Hardjo-bovis (strain JB197).